We begin with the raw amino-acid sequence, 155 residues long: Deoxyuridine 5'-triphosphate nucleotidohydrolase (155 aa).

Residues 74–76, asparagine 87, and 91–93 contribute to the substrate site; these read RSG and LID.

The protein belongs to the dUTPase family. Requires Mg(2+) as cofactor.

The catalysed reaction is dUTP + H2O = dUMP + diphosphate + H(+). Its pathway is pyrimidine metabolism; dUMP biosynthesis; dUMP from dCTP (dUTP route): step 2/2. Its function is as follows. This enzyme is involved in nucleotide metabolism: it produces dUMP, the immediate precursor of thymidine nucleotides and it decreases the intracellular concentration of dUTP so that uracil cannot be incorporated into DNA. This is Deoxyuridine 5'-triphosphate nucleotidohydrolase from Xylella fastidiosa (strain M12).